Reading from the N-terminus, the 285-residue chain is Bifunctional protein FolD (285 aa).

Residues 165 to 167 (GRS), Ser190, and Ile231 contribute to the NADP(+) site.

The protein belongs to the tetrahydrofolate dehydrogenase/cyclohydrolase family. In terms of assembly, homodimer.

It catalyses the reaction (6R)-5,10-methylene-5,6,7,8-tetrahydrofolate + NADP(+) = (6R)-5,10-methenyltetrahydrofolate + NADPH. It carries out the reaction (6R)-5,10-methenyltetrahydrofolate + H2O = (6R)-10-formyltetrahydrofolate + H(+). It participates in one-carbon metabolism; tetrahydrofolate interconversion. Functionally, catalyzes the oxidation of 5,10-methylenetetrahydrofolate to 5,10-methenyltetrahydrofolate and then the hydrolysis of 5,10-methenyltetrahydrofolate to 10-formyltetrahydrofolate. This Verminephrobacter eiseniae (strain EF01-2) protein is Bifunctional protein FolD.